The primary structure comprises 742 residues: Probable LRR receptor-like serine/threonine-protein kinase At2g02780 (742 aa).

The first 25 residues, 1–25 (MQISLQIHLSSFTFLLLIFLLPVLS), serve as a signal peptide directing secretion. The Extracellular segment spans residues 26–354 (ESQVASSESQ…KDSARIKLGL (329 aa)). LRR repeat units lie at residues 74-96 (HGHVTELTVTGNRTSKLSGSFHK), 104-128 (LSSLKTLSLTSLGISGSLSPKIITK), 130-154 (SPSLESLNLSSNFISGKIPEEIVSL), 156-177 (NLKSLVLRDNMFWGFVSDDLRG), 178-204 (LSNLQELDLGGNKLGPEVPSLPSKLTT), 206-223 (SLKNNSFRSKIPEQIKKL), 224-247 (NNLQSLDLSSNEFTGSIPEFLFSI), 249-271 (SLQILSLDQNLLSGSLPNSSCTS), and 273-294 (KIITLDVSHNLLTGKLPSCYSS). N-linked (GlcNAc...) asparagine glycosylation is present at Asn-85. N-linked (GlcNAc...) asparagine glycosylation occurs at Asn-137. Asn-209 carries N-linked (GlcNAc...) asparagine glycosylation. An N-linked (GlcNAc...) asparagine glycan is attached at Asn-266. Asn-299 carries N-linked (GlcNAc...) asparagine glycosylation. The helical transmembrane segment at 355 to 375 (VILIIIGVIILAAILVLLVLI) threads the bilayer. Residues 376–742 (ALKRRRSRSE…HESSMKAIYE (367 aa)) are Cytoplasmic-facing. Positions 386–424 (DDPFEVNNSNNERHASDKVSVCSTTTASSKSLPDSRRVP) are disordered. A compositionally biased stretch (polar residues) spans 406 to 417 (VCSTTTASSKSL). The 295-residue stretch at 426 to 720 (TMRSAVIGLP…DVVWNLQYTI (295 aa)) folds into the Protein kinase domain.

It belongs to the protein kinase superfamily. Ser/Thr protein kinase family.

Its subcellular location is the membrane. The catalysed reaction is L-seryl-[protein] + ATP = O-phospho-L-seryl-[protein] + ADP + H(+). It catalyses the reaction L-threonyl-[protein] + ATP = O-phospho-L-threonyl-[protein] + ADP + H(+). In Arabidopsis thaliana (Mouse-ear cress), this protein is Probable LRR receptor-like serine/threonine-protein kinase At2g02780.